The chain runs to 502 residues: uncharacterized protein (502 aa).

The next 2 helical transmembrane spans lie at Asn10–Phe30 and Phe473–Val493.

It is found in the cell membrane. This is an uncharacterized protein from Borreliella burgdorferi (strain ATCC 35210 / DSM 4680 / CIP 102532 / B31) (Borrelia burgdorferi).